The chain runs to 238 residues: tRNA (guanine-N(7)-)-methyltransferase (238 aa).

S-adenosyl-L-methionine contacts are provided by Glu-68, Glu-93, Asp-120, and Asp-143. Asp-143 is an active-site residue. Substrate is bound by residues Lys-147, Asp-179, and 216–219 (TKFE).

Belongs to the class I-like SAM-binding methyltransferase superfamily. TrmB family.

The catalysed reaction is guanosine(46) in tRNA + S-adenosyl-L-methionine = N(7)-methylguanosine(46) in tRNA + S-adenosyl-L-homocysteine. Its pathway is tRNA modification; N(7)-methylguanine-tRNA biosynthesis. Catalyzes the formation of N(7)-methylguanine at position 46 (m7G46) in tRNA. This chain is tRNA (guanine-N(7)-)-methyltransferase, found in Shewanella denitrificans (strain OS217 / ATCC BAA-1090 / DSM 15013).